We begin with the raw amino-acid sequence, 521 residues long: Riboflavin transporter MCH5 (521 aa).

2 disordered regions span residues M1–Y33 and N65–I96. The Cytoplasmic segment spans residues M1–G103. A helical transmembrane segment spans residues F104 to L124. The N-linked (GlcNAc...) asparagine glycan is linked to N125. Residues N125 to S143 lie on the Extracellular side of the membrane. Residues V144 to I164 traverse the membrane as a helical segment. At S165 to N172 the chain is on the cytoplasmic side. The chain crosses the membrane as a helical span at residues G173–A193. Residue N194 is glycosylated (N-linked (GlcNAc...) asparagine). Topologically, residues N194 to H200 are extracellular. A helical transmembrane segment spans residues F201–V221. The Cytoplasmic segment spans residues S222–G233. The helical transmembrane segment at T234–L254 threads the bilayer. Topologically, residues R255–G269 are extracellular. The chain crosses the membrane as a helical span at residues F270 to I290. Topologically, residues L291 to K325 are cytoplasmic. The chain crosses the membrane as a helical span at residues A326–I346. At N347–A367 the chain is on the extracellular side. A helical membrane pass occupies residues Y368–L388. The Cytoplasmic portion of the chain corresponds to S389–N396. A helical membrane pass occupies residues V397–G417. The Extracellular segment spans residues T418–N422. The N-linked (GlcNAc...) asparagine glycan is linked to N419. Residues M423 to V443 form a helical membrane-spanning segment. The Cytoplasmic portion of the chain corresponds to C444–M461. A helical membrane pass occupies residues Y462–I482. Topologically, residues K483–D487 are extracellular. The helical transmembrane segment at Y488–I508 threads the bilayer. At S509–F521 the chain is on the cytoplasmic side.

It belongs to the major facilitator superfamily. Monocarboxylate porter (TC 2.A.1.13) family.

The protein localises to the cell membrane. Riboflavin transporter involved in riboflavin (vitamin B2) uptake. Does not act in the transport of monocarboxylic acids across the plasma membrane. The chain is Riboflavin transporter MCH5 (MCH5) from Saccharomyces cerevisiae (strain ATCC 204508 / S288c) (Baker's yeast).